Reading from the N-terminus, the 102-residue chain is MSTEYGIALGMIETRGLVPAIEAADAMTKAAEVRLVSREFVGGGYVTVLVRGETGAVNAAVRAGADACERVGDGLVAAHIIARPHKEVEPVLALGNSSPDRS.

The BMC domain occupies 8–93 (ALGMIETRGL…PHKEVEPVLA (86 aa)).

This sequence belongs to the bacterial microcompartments protein family. CsoS1 subfamily. As to quaternary structure, homohexamer with a small central pore.

It is found in the carboxysome. Functionally, one of shell proteins of the carboxysome, a polyhedral inclusion where RuBisCO (ribulose bisphosphate carboxylase, ccbL-ccbS) is sequestered. Assembles into hexamers which make sheets that form the facets of the polyhedral carboxysome. The shell probably limits the diffusion of CO(2) into and out of the carboxysome. This chain is Carboxysome shell protein CsoS1C, found in Hydrogenovibrio crunogenus (strain DSM 25203 / XCL-2) (Thiomicrospira crunogena).